The primary structure comprises 360 residues: Putative transport protein BU123 (360 aa).

A run of 9 helical transmembrane segments spans residues 18–38 (IFIV…ILGF), 39–59 (FWAS…QKIL), 66–86 (AVII…FFLV), 161–181 (GLFI…YWNG), 204–224 (LLLA…TALI), 230–250 (GIGL…IIFF), 251–271 (SCLI…WLYW), 280–300 (ILLI…PFFI), and 316–336 (IGGL…VLVI).

It belongs to the autoinducer-2 exporter (AI-2E) (TC 2.A.86) family.

It localises to the cell membrane. This is Putative transport protein BU123 from Buchnera aphidicola subsp. Acyrthosiphon pisum (strain APS) (Acyrthosiphon pisum symbiotic bacterium).